A 415-amino-acid chain; its full sequence is Queuine tRNA-ribosyltransferase accessory subunit 2 (415 aa).

Zn(2+)-binding residues include Cys351, Cys353, Cys356, and His382.

The protein belongs to the queuine tRNA-ribosyltransferase family. QTRT2 subfamily. As to quaternary structure, heterodimer of a catalytic subunit qtrt1 and an accessory subunit qtrt2. The cofactor is Zn(2+).

Its subcellular location is the cytoplasm. It localises to the mitochondrion outer membrane. Its function is as follows. Non-catalytic subunit of the queuine tRNA-ribosyltransferase (TGT) that catalyzes the base-exchange of a guanine (G) residue with queuine (Q) at position 34 (anticodon wobble position) in tRNAs with GU(N) anticodons (tRNA-Asp, -Asn, -His and -Tyr), resulting in the hypermodified nucleoside queuosine (7-(((4,5-cis-dihydroxy-2-cyclopenten-1-yl)amino)methyl)-7-deazaguanosine). In Xenopus laevis (African clawed frog), this protein is Queuine tRNA-ribosyltransferase accessory subunit 2.